Here is a 357-residue protein sequence, read N- to C-terminus: Ribonuclease 3 (357 aa).

Positions 6–155 (IKFIQDQIGY…ILGAIALDSN (150 aa)) constitute an RNase III domain. Glu-45 contributes to the Mg(2+) binding site. Residue Asp-49 is part of the active site. Mg(2+) is bound by residues Asp-141 and Glu-144. Glu-144 is a catalytic residue. DRBM domains are found at residues 198–267 (PLHC…YLKD) and 285–355 (DSIG…FVLE).

Belongs to the ribonuclease III family. Homodimer. Requires Mg(2+) as cofactor.

The protein resides in the cytoplasm. The catalysed reaction is Endonucleolytic cleavage to 5'-phosphomonoester.. Digests double-stranded RNA. Involved in the processing of primary rRNA transcript to yield the immediate precursors to the large and small rRNAs (23S and 16S). Processes some mRNAs, and tRNAs when they are encoded in the rRNA operon. Processes pre-crRNA and tracrRNA of type II CRISPR loci if present in the organism. The protein is Ribonuclease 3 (rnc) of Roseburia hominis (strain DSM 16839 / JCM 17582 / NCIMB 14029 / A2-183).